Here is a 432-residue protein sequence, read N- to C-terminus: Small ribosomal subunit protein uS5m (432 aa).

The tract at residues 110–130 (AGARKGRGKRTKKKKRKDLNR) is disordered. The span at 113 to 127 (RKGRGKRTKKKKRKD) shows a compositional bias: basic residues. The S5 DRBM domain maps to 220-284 (FDTRILEVRN…NRAIHYLHYI (65 aa)).

The protein belongs to the universal ribosomal protein uS5 family. In terms of assembly, component of the mitochondrial ribosome small subunit (28S) which comprises a 12S rRNA and about 30 distinct proteins.

The protein resides in the mitochondrion. The polypeptide is Small ribosomal subunit protein uS5m (Mrps5) (Mus musculus (Mouse)).